A 625-amino-acid chain; its full sequence is Grainyhead-like protein 2 homolog (625 aa).

The transcription activation stretch occupies residues 1–93; the sequence is MSQESDNNKR…KASDSQEDQD (93 aa). Disordered regions lie at residues 198 to 222 and 428 to 452; these read ASHS…SFKD and EERK…SSDG. The region spanning 244-482 is the Grh/CP2 DB domain; sequence GSGTFQYTLE…DLHSQPVLFI (239 aa). The span at 440–451 shows a compositional bias: polar residues; it reads QASQAQCNNSSD.

It belongs to the grh/CP2 family. Grainyhead subfamily. As to quaternary structure, homodimer, also forms heterodimers with GRHL1 or GRHL3.

It is found in the nucleus. Its subcellular location is the membrane. Transcription factor playing an important role in primary neurulation and in epithelial development. Binds directly to the consensus DNA sequence 5'-AACCGGTT-3' acting as an activator and repressor on distinct target genes. During embryogenesis, plays unique and cooperative roles with GRHL3 in establishing distinct zones of primary neurulation. Essential for closure 3 (rostral end of the forebrain), functions cooperatively with GRHL3 in closure 2 (forebrain/midbrain boundary) and posterior neuropore closure. Regulates epithelial morphogenesis acting as a target gene-associated transcriptional activator of apical junctional complex components. Up-regulates of CLDN3 and CLDN4, as well as of RAB25, which increases the CLDN4 protein and its localization at tight junctions. Comprises an essential component of the transcriptional machinery that establishes appropriate expression levels of CLDN4 and CDH1 in different types of epithelia. Exhibits functional redundancy with GRHL3 in epidermal morphogenetic events such as eyelid fusion and epidermal wound repair. In lung, forms a regulatory loop with NKX2-1 that coordinates lung epithelial cell morphogenesis and differentiation. In keratinocytes, plays a role in telomerase activation during cellular proliferation, regulates TERT expression by binding to TERT promoter region and inhibiting DNA methylation at the 5'-CpG island, possibly by interfering with DNMT1 enzyme activity. In addition, impairs keratinocyte differentiation and epidermal function by inhibiting the expression of genes clustered at the epidermal differentiation complex (EDC) as well as GRHL1 and GRHL3 through epigenetic mechanisms. This Mus musculus (Mouse) protein is Grainyhead-like protein 2 homolog (Grhl2).